Here is a 191-residue protein sequence, read N- to C-terminus: Probable GTP-binding protein EngB (191 aa).

Positions 22 to 191 (DFDHFLILGR…KLINEEFSNE (170 aa)) constitute an EngB-type G domain. Residues 30–37 (GRSNVGKS), 57–61 (GKTIT), 75–78 (DAPG), 142–145 (TKYD), and 172–174 (TSS) each bind GTP. Mg(2+) is bound by residues serine 37 and threonine 59.

The protein belongs to the TRAFAC class TrmE-Era-EngA-EngB-Septin-like GTPase superfamily. EngB GTPase family. The cofactor is Mg(2+).

Necessary for normal cell division and for the maintenance of normal septation. The sequence is that of Probable GTP-binding protein EngB from Acholeplasma laidlawii (strain PG-8A).